The following is a 371-amino-acid chain: Uroporphyrinogen decarboxylase (371 aa).

Positions M1 to T14 are enriched in polar residues. Positions M1–P30 are disordered. Substrate-binding positions include R49–R53, D98, Y173, S228, and H342.

It belongs to the uroporphyrinogen decarboxylase family. In terms of assembly, homodimer.

The protein localises to the cytoplasm. The catalysed reaction is uroporphyrinogen III + 4 H(+) = coproporphyrinogen III + 4 CO2. It participates in porphyrin-containing compound metabolism; protoporphyrin-IX biosynthesis; coproporphyrinogen-III from 5-aminolevulinate: step 4/4. In terms of biological role, catalyzes the decarboxylation of four acetate groups of uroporphyrinogen-III to yield coproporphyrinogen-III. The chain is Uroporphyrinogen decarboxylase from Salinispora tropica (strain ATCC BAA-916 / DSM 44818 / JCM 13857 / NBRC 105044 / CNB-440).